Consider the following 376-residue polypeptide: N-acetyldiaminopimelate deacetylase (376 aa).

Asp69 is an active-site residue. Glu128 acts as the Proton acceptor in catalysis.

Belongs to the peptidase M20A family. N-acetyldiaminopimelate deacetylase subfamily.

It catalyses the reaction N-acetyl-(2S,6S)-2,6-diaminopimelate + H2O = (2S,6S)-2,6-diaminopimelate + acetate. The protein operates within amino-acid biosynthesis; L-lysine biosynthesis via DAP pathway; LL-2,6-diaminopimelate from (S)-tetrahydrodipicolinate (acetylase route): step 3/3. Catalyzes the conversion of N-acetyl-diaminopimelate to diaminopimelate and acetate. This Bacillus cereus (strain B4264) protein is N-acetyldiaminopimelate deacetylase.